The chain runs to 224 residues: MTLFHFGNCFALAYFPYFITYKCSGLSEYNAFWKCVQAGVTYLFVQLCKMLFLATFFPTWEGGIYDFIGEFMKASVDVADLIGLNLVMSRNAGKGEYKIMVAALGWATAELIMSRCIPLWVGARGIEFDWKYIQMSIDSNISLVHYIVASAQVWMITRYDLYHTFRPAVLLLMFLSVYKAFVMETFVHLCSLGSWTALLARAVVTGLLALSTLALYVAVVNVHS.

A helical membrane pass occupies residues 1-21 (MTLFHFGNCFALAYFPYFITY). Topologically, residues 22–34 (KCSGLSEYNAFWK) are cytoplasmic. Residues 35–58 (CVQAGVTYLFVQLCKMLFLATFFP) traverse the membrane as a helical segment. The Lumenal portion of the chain corresponds to 59–66 (TWEGGIYD). Residues 67-88 (FIGEFMKASVDVADLIGLNLVM) traverse the membrane as a helical segment. The Cytoplasmic portion of the chain corresponds to 89 to 98 (SRNAGKGEYK). The chain crosses the membrane as a helical span at residues 99-124 (IMVAALGWATAELIMSRCIPLWVGAR). The Lumenal segment spans residues 125 to 129 (GIEFD). A helical membrane pass occupies residues 130–155 (WKYIQMSIDSNISLVHYIVASAQVWM). The Cytoplasmic segment spans residues 156–164 (ITRYDLYHT). Residues 165 to 187 (FRPAVLLLMFLSVYKAFVMETFV) traverse the membrane as a helical segment. At 188–194 (HLCSLGS) the chain is on the lumenal side. The helical transmembrane segment at 195–216 (WTALLARAVVTGLLALSTLALY) threads the bilayer. Residues 217–224 (VAVVNVHS) lie on the Cytoplasmic side of the membrane.

It belongs to the TMEM147 family. As to quaternary structure, component of the back of Sec61 (BOS) complex, composed of NCLN/Nicalin, NOMO1 and TMEM147. The BOS complex is part of the multi-pass translocon (MPT) complex, composed of three subcomplexes, the GEL complex (composed of RAB5IF/OPTI and TMCO1), the BOS complex (composed of NCLN/Nicalin, NOMO1 and TMEM147) and the PAT complex (composed of WDR83OS/Asterix and CCDC47). The MPT complex associates with the SEC61 complex. Interacts with CHRM3, CHRM1 and AVPR2. Interacts with LBR; promoting LBR localization to the nucleus inner membrane. Interacts with DHCR7.

Its subcellular location is the endoplasmic reticulum membrane. It is found in the nucleus membrane. It localises to the cell membrane. Component of the multi-pass translocon (MPT) complex that mediates insertion of multi-pass membrane proteins into the lipid bilayer of membranes. The MPT complex takes over after the SEC61 complex: following membrane insertion of the first few transmembrane segments of proteins by the SEC61 complex, the MPT complex occludes the lateral gate of the SEC61 complex to promote insertion of subsequent transmembrane regions. Also acts as a negative regulator of CHRM3 function, most likely by interfering with its trafficking to the cell membrane. Negatively regulates CHRM3-mediated calcium mobilization and activation of RPS6KA1/p90RSK activity. Regulates LBR localization to the nucleus inner membrane. This is BOS complex subunit TMEM147 from Canis lupus familiaris (Dog).